The primary structure comprises 84 residues: MNKEEIIKEFQIHEGDTGSAEVQVALLTARIKHLTEHLKKHPKDYHSRRGLMKLVGRRRKILKYLRNKNPEAYKEVIQKLGLRK.

It belongs to the universal ribosomal protein uS15 family. In terms of assembly, part of the 30S ribosomal subunit. Forms a bridge to the 50S subunit in the 70S ribosome, contacting the 23S rRNA.

In terms of biological role, one of the primary rRNA binding proteins, it binds directly to 16S rRNA where it helps nucleate assembly of the platform of the 30S subunit by binding and bridging several RNA helices of the 16S rRNA. Functionally, forms an intersubunit bridge (bridge B4) with the 23S rRNA of the 50S subunit in the ribosome. This is Small ribosomal subunit protein uS15 from Thermosipho melanesiensis (strain DSM 12029 / CIP 104789 / BI429).